The primary structure comprises 1195 residues: DNA-directed RNA polymerase subunit Rpo2 (1195 aa).

Residues 894-909 (LEEGEERLGPQRRRES) show a composition bias toward basic and acidic residues. Positions 894–914 (LEEGEERLGPQRRRESSVTMR) are disordered. Residues C1135, C1140, C1155, and C1158 each contribute to the Zn(2+) site.

It belongs to the RNA polymerase beta chain family. In terms of assembly, part of the RNA polymerase complex. Zn(2+) is required as a cofactor.

It localises to the cytoplasm. The enzyme catalyses RNA(n) + a ribonucleoside 5'-triphosphate = RNA(n+1) + diphosphate. Its function is as follows. DNA-dependent RNA polymerase (RNAP) catalyzes the transcription of DNA into RNA using the four ribonucleoside triphosphates as substrates. This subunit is involved in DNA promoter recognition. The protein is DNA-directed RNA polymerase subunit Rpo2 of Thermoplasma acidophilum (strain ATCC 25905 / DSM 1728 / JCM 9062 / NBRC 15155 / AMRC-C165).